The chain runs to 451 residues: ACT domain-containing protein ACR4 (451 aa).

ACT domains follow at residues 35–118 (VIRV…VIPS), 123–200 (VIEL…NTPR), 259–335 (VVTV…VSEG), and 337–416 (KLEL…QEQQ). The tract at residues 409–428 (KNNPQEQQQRQKSPSHESPT) is disordered. Over residues 410–420 (NNPQEQQQRQK) the composition is skewed to polar residues.

As to expression, highly expressed in flowers and at lower levels in leaves and siliques.

In terms of biological role, may bind amino acids. This is ACT domain-containing protein ACR4 from Arabidopsis thaliana (Mouse-ear cress).